The following is a 265-amino-acid chain: UPF0354 protein GWCH70_2742 (265 aa).

This sequence belongs to the UPF0354 family.

This Geobacillus sp. (strain WCH70) protein is UPF0354 protein GWCH70_2742.